A 209-amino-acid chain; its full sequence is MNCIFLGPPGAGKGTLAFEVSKSYKIPHISTGDLFRAAIKEQTDLGKKVKAVIDSGALVSDDLTIALVKERLERDDTKKGFILDGFPRTIAQADALEDIVKIDSVINFDISDDEVIKRLSGRRVCSSCGQSFHIEFVKPKKEGICDSCSGDLMIRPDDKIEAIQKRLETYRNQTAPLIDYYTKKDLIVNIDARPASEKVLASFKVKFPH.

An ATP-binding site is contributed by 10 to 15 (GAGKGT). The tract at residues 30 to 59 (STGDLFRAAIKEQTDLGKKVKAVIDSGALV) is NMP. Residues Thr-31, Arg-36, 57-59 (ALV), 85-88 (GFPR), and Gln-92 each bind AMP. Residues 121 to 158 (GRRVCSSCGQSFHIEFVKPKKEGICDSCSGDLMIRPDD) form an LID region. Arg-122 contacts ATP. Zn(2+) contacts are provided by Cys-125 and Cys-128. 131–132 (SF) contacts ATP. The Zn(2+) site is built by Cys-145 and Cys-148. Residues Arg-155 and Arg-166 each contribute to the AMP site. An ATP-binding site is contributed by Pro-194.

The protein belongs to the adenylate kinase family. As to quaternary structure, monomer.

Its subcellular location is the cytoplasm. The catalysed reaction is AMP + ATP = 2 ADP. The protein operates within purine metabolism; AMP biosynthesis via salvage pathway; AMP from ADP: step 1/1. In terms of biological role, catalyzes the reversible transfer of the terminal phosphate group between ATP and AMP. Plays an important role in cellular energy homeostasis and in adenine nucleotide metabolism. The chain is Adenylate kinase from Treponema denticola (strain ATCC 35405 / DSM 14222 / CIP 103919 / JCM 8153 / KCTC 15104).